We begin with the raw amino-acid sequence, 126 residues long: Histone H2B 3 (126 aa).

Over residues 1-12 (MPEPAKSAPAPK) the composition is skewed to low complexity. A disordered region spans residues 1 to 34 (MPEPAKSAPAPKKGSKKAVTKTQKKGDKKRRKTR). An N6-acetyllysine mark is found at lysine 6 and lysine 13. Residues 13-34 (KGSKKAVTKTQKKGDKKRRKTR) are compositionally biased toward basic residues. At serine 15 the chain carries Phosphoserine. Lysine 16 and lysine 21 each carry N6-acetyllysine. The O-linked (GlcNAc) serine glycan is linked to serine 113. A Glycyl lysine isopeptide (Lys-Gly) (interchain with G-Cter in ubiquitin) cross-link involves residue lysine 121.

The protein belongs to the histone H2B family. In terms of assembly, the nucleosome is a histone octamer containing two molecules each of H2A, H2B, H3 and H4 assembled in one H3-H4 heterotetramer and two H2A-H2B heterodimers. The octamer wraps approximately 147 bp of DNA. Monoubiquitination of Lys-121 by the BRE1 gives a specific tag for epigenetic transcriptional activation and is also prerequisite for histone H3 'Lys-4' and 'Lys-79' methylation. Post-translationally, phosphorylated on Ser-15 during apoptosis; which facilitates apoptotic chromatin condensation. In terms of processing, glcNAcylation at Ser-113 promotes monoubiquitination of Lys-121. It fluctuates in response to extracellular glucose, and associates with transcribed genes.

Its subcellular location is the nucleus. The protein resides in the chromosome. Functionally, core component of nucleosome. Nucleosomes wrap and compact DNA into chromatin, limiting DNA accessibility to the cellular machineries which require DNA as a template. Histones thereby play a central role in transcription regulation, DNA repair, DNA replication and chromosomal stability. DNA accessibility is regulated via a complex set of post-translational modifications of histones, also called histone code, and nucleosome remodeling. The polypeptide is Histone H2B 3 (hist2h2l) (Danio rerio (Zebrafish)).